The following is a 132-amino-acid chain: Phosphoribosyl-AMP cyclohydrolase (132 aa).

D79 lines the Mg(2+) pocket. C80 is a Zn(2+) binding site. Mg(2+)-binding residues include D81 and D83. Zn(2+) is bound by residues C100 and C107.

The protein belongs to the PRA-CH family. As to quaternary structure, homodimer. It depends on Mg(2+) as a cofactor. Requires Zn(2+) as cofactor.

It localises to the cytoplasm. It carries out the reaction 1-(5-phospho-beta-D-ribosyl)-5'-AMP + H2O = 1-(5-phospho-beta-D-ribosyl)-5-[(5-phospho-beta-D-ribosylamino)methylideneamino]imidazole-4-carboxamide. The protein operates within amino-acid biosynthesis; L-histidine biosynthesis; L-histidine from 5-phospho-alpha-D-ribose 1-diphosphate: step 3/9. Its function is as follows. Catalyzes the hydrolysis of the adenine ring of phosphoribosyl-AMP. The sequence is that of Phosphoribosyl-AMP cyclohydrolase from Delftia acidovorans (strain DSM 14801 / SPH-1).